The chain runs to 943 residues: PAX-interacting protein 1 (943 aa).

2 consecutive BRCT domains span residues 8 to 93 (VPEE…GFSP) and 94 to 182 (ESGQ…LYHP). Disordered stretches follow at residues 190–281 (PEEE…RRLQ), 400–507 (AQQQ…QQMR), and 620–641 (QQHL…PHQT). Residues 198–214 (ENERSSRSEGSYSDRRS) are compositionally biased toward basic and acidic residues. Residues 220-230 (SSPTSSRDASP) are compositionally biased toward low complexity. The segment covering 620 to 635 (QQHLQNQQPLQHQNQQ) has biased composition (low complexity). BRCT domains are found at residues 664 to 756 (PEEG…RTLH) and 763 to 851 (PGAK…IQHS). The short motif at 730–747 (GKRCVTAHWLNTVLKKKK) is the Nuclear localization signal element.

Interacts with smad2 via its last three BRCT domain-containing regions in an activin signal-dependent manner.

The protein localises to the nucleus. Functionally, involved in DNA damage response. May function as transcriptional cofactor in TGF beta signaling. Accentuates Smad2-dependent transcription. The sequence is that of PAX-interacting protein 1 (paxip1) from Danio rerio (Zebrafish).